The chain runs to 359 residues: 3-dehydroquinate synthase (359 aa).

NAD(+) is bound by residues 72–77 (EGEEHK), 106–110 (GVVGD), 130–131 (TT), Lys143, Lys152, and 170–173 (TLTT). Glu185, His248, and His265 together coordinate Zn(2+).

It belongs to the sugar phosphate cyclases superfamily. Dehydroquinate synthase family. Requires Co(2+) as cofactor. The cofactor is Zn(2+). NAD(+) serves as cofactor.

The protein resides in the cytoplasm. The enzyme catalyses 7-phospho-2-dehydro-3-deoxy-D-arabino-heptonate = 3-dehydroquinate + phosphate. The protein operates within metabolic intermediate biosynthesis; chorismate biosynthesis; chorismate from D-erythrose 4-phosphate and phosphoenolpyruvate: step 2/7. Its function is as follows. Catalyzes the conversion of 3-deoxy-D-arabino-heptulosonate 7-phosphate (DAHP) to dehydroquinate (DHQ). The chain is 3-dehydroquinate synthase from Pelobacter propionicus (strain DSM 2379 / NBRC 103807 / OttBd1).